Consider the following 569-residue polypeptide: Pyrophosphate--fructose 6-phosphate 1-phosphotransferase subunit beta (569 aa).

Position 107 (G107) interacts with diphosphate. Mg(2+) is bound at residue D201. Substrate is bound by residues 229-231 (TID), 268-269 (KY), 276-278 (MGR), E337, and 442-445 (YEGR). Catalysis depends on D231, which acts as the Proton acceptor.

Belongs to the phosphofructokinase type A (PFKA) family. PPi-dependent PFK group II subfamily. Clade 'Long' sub-subfamily. As to quaternary structure, tetramer of two alpha (regulatory) and two beta (catalytic) chains. Requires Mg(2+) as cofactor.

It is found in the cytoplasm. The enzyme catalyses beta-D-fructose 6-phosphate + diphosphate = beta-D-fructose 1,6-bisphosphate + phosphate + H(+). It participates in carbohydrate degradation; glycolysis; D-glyceraldehyde 3-phosphate and glycerone phosphate from D-glucose: step 3/4. With respect to regulation, allosterically activated by fructose 2,6-bisphosphate. In terms of biological role, catalytic subunit of pyrophosphate--fructose 6-phosphate 1-phosphotransferase. Catalyzes the phosphorylation of D-fructose 6-phosphate, the first committing step of glycolysis. Uses inorganic phosphate (PPi) as phosphoryl donor instead of ATP like common ATP-dependent phosphofructokinases (ATP-PFKs), which renders the reaction reversible, and can thus function both in glycolysis and gluconeogenesis. The protein is Pyrophosphate--fructose 6-phosphate 1-phosphotransferase subunit beta of Solanum tuberosum (Potato).